The primary structure comprises 421 residues: MVTIVLGAQFGDEGKGKITDLLSQSATLCCRAAGGHNAGHTIVHDDITYDFHILPSGLISPDCINLVGTGTVVHVPSFFKELDALKAKGLKDADKRIFISDRAQVCFDLHSVVDGLEEAILAGKKVGTTGKGIGPCYSDKASRRGVRIGEVLEKGVVESKLRALEAGYRRQFGELKYDLEDEVKRFHEYRTKLQPYVVDQMAFMHKHRSSPSVLVEGANALLLDIDHGTYPYVTSSCTGLGGAIQGLTLNPTSIKSIVGVVKAYSTRVGSGPFPTEQNNAVGEKLQRAGREFGVTTGRRRRCGWLDMVMCRYSNAINHYTVINLTKLDILDDFDEIKVAVAYQLDGKLLESFPAQADVLDKVEVKYVTLPGWKSNTMGATKWEHLPTNAQRYVEFIEREMGGVPIRWIGTGPARNHMIERI.

Residues 11-17 (GDEGKGK) and 39-41 (GHT) contribute to the GTP site. Catalysis depends on Asp12, which acts as the Proton acceptor. 2 residues coordinate Mg(2+): Asp12 and Gly39. IMP-binding positions include 12–15 (DEGK), 37–40 (NAGH), Thr129, Arg143, Asn219, Thr234, and Arg298. His40 functions as the Proton donor in the catalytic mechanism. 294–300 (VTTGRRR) lines the substrate pocket. GTP contacts are provided by residues Arg300, 326 to 328 (KLD), and 409 to 411 (GTG).

Belongs to the adenylosuccinate synthetase family. In terms of assembly, homodimer. Mg(2+) serves as cofactor.

The protein localises to the cytoplasm. The enzyme catalyses IMP + L-aspartate + GTP = N(6)-(1,2-dicarboxyethyl)-AMP + GDP + phosphate + 2 H(+). The protein operates within purine metabolism; AMP biosynthesis via de novo pathway; AMP from IMP: step 1/2. In terms of biological role, plays an important role in the de novo pathway and in the salvage pathway of purine nucleotide biosynthesis. Catalyzes the first committed step in the biosynthesis of AMP from IMP. This Paracoccidioides brasiliensis (strain Pb03) protein is Adenylosuccinate synthetase.